The following is a 27-amino-acid chain: DELTA-pseudomyrmecitoxin-Pp1a subunit A (27 aa).

Heterodimer composed of subunit A and subunit B (DELTA-PSDTX-Pp1a); disulfide-linked. Expressed by the venom gland.

The protein localises to the secreted. This heterodimer has insecticidal and cytotoxic properties. Induces immediate paralysis when injected into blowflies (Lucilia cuprina), and then death within 24 hours. Also inhibits the growth of Aedes albopictus mosquito C6/36 cells. The polypeptide is DELTA-pseudomyrmecitoxin-Pp1a subunit A (Pseudomyrmex penetrator (Ant)).